The following is a 477-amino-acid chain: Stromelysin-3 (477 aa).

The N-terminal stretch at 1–17 (MHLLILLPALCVLGAHS) is a signal peptide. Positions 18 to 85 (APLSYTYLQH…SSSGRNRQKR (68 aa)) are cleaved as a propeptide — activation peptide. A disordered region spans residues 64–83 (RCGVPDIPAPPDSSSGRNRQ). The Zn(2+) site is built by Cys-65, His-152, and Asp-154. Ca(2+) is bound by residues Asp-159, Gly-160, Gly-162, and Ile-164. The Zn(2+) site is built by His-167, His-180, and His-203. The active site involves Glu-204. Zn(2+)-binding residues include His-207 and His-213. Cys-279 and Cys-466 are oxidised to a cystine. Hemopexin repeat units follow at residues 280–324 (KTNF…WRGI), 325–369 (PDTV…GISV), 370–418 (TQIQ…WRGV), and 419–466 (PKGI…FFNC).

Belongs to the peptidase M10A family. Ca(2+) serves as cofactor. It depends on Zn(2+) as a cofactor. As to expression, expressed in fibroblast cells that are activated by thyroid hormone. High levels in resorbing tail.

Its subcellular location is the secreted. The protein resides in the extracellular space. The protein localises to the extracellular matrix. Functionally, may be involved in the modification of the extracellular matrix during metamorphic apoptosis. This chain is Stromelysin-3 (mmp11), found in Xenopus laevis (African clawed frog).